Consider the following 452-residue polypeptide: Bifunctional protein GlmU (452 aa).

The segment at 1-226 (MSLHIIILAA…LHEVEGVNNR (226 aa)) is pyrophosphorylase. Residues 8-11 (LAAG), Lys22, Gln73, 78-79 (GT), 100-102 (YGD), Gly136, Glu151, Asn166, and Asn224 contribute to the UDP-N-acetyl-alpha-D-glucosamine site. Asp102 contacts Mg(2+). A Mg(2+)-binding site is contributed by Asn224. The linker stretch occupies residues 227–247 (IQLAALERAYQQQVAEELMLA). The N-acetyltransferase stretch occupies residues 248 to 452 (GATLRDPARV…IDGWTRPVKK (205 aa)). The UDP-N-acetyl-alpha-D-glucosamine site is built by Arg330 and Lys348. His360 acts as the Proton acceptor in catalysis. Residues Tyr363 and Asn374 each contribute to the UDP-N-acetyl-alpha-D-glucosamine site. Residues Ala377, 383 to 384 (NY), Ser402, Ala420, and Arg437 contribute to the acetyl-CoA site.

The protein in the N-terminal section; belongs to the N-acetylglucosamine-1-phosphate uridyltransferase family. In the C-terminal section; belongs to the transferase hexapeptide repeat family. In terms of assembly, homotrimer. Mg(2+) is required as a cofactor.

It localises to the cytoplasm. It carries out the reaction alpha-D-glucosamine 1-phosphate + acetyl-CoA = N-acetyl-alpha-D-glucosamine 1-phosphate + CoA + H(+). The catalysed reaction is N-acetyl-alpha-D-glucosamine 1-phosphate + UTP + H(+) = UDP-N-acetyl-alpha-D-glucosamine + diphosphate. Its pathway is nucleotide-sugar biosynthesis; UDP-N-acetyl-alpha-D-glucosamine biosynthesis; N-acetyl-alpha-D-glucosamine 1-phosphate from alpha-D-glucosamine 6-phosphate (route II): step 2/2. It participates in nucleotide-sugar biosynthesis; UDP-N-acetyl-alpha-D-glucosamine biosynthesis; UDP-N-acetyl-alpha-D-glucosamine from N-acetyl-alpha-D-glucosamine 1-phosphate: step 1/1. It functions in the pathway bacterial outer membrane biogenesis; LPS lipid A biosynthesis. Catalyzes the last two sequential reactions in the de novo biosynthetic pathway for UDP-N-acetylglucosamine (UDP-GlcNAc). The C-terminal domain catalyzes the transfer of acetyl group from acetyl coenzyme A to glucosamine-1-phosphate (GlcN-1-P) to produce N-acetylglucosamine-1-phosphate (GlcNAc-1-P), which is converted into UDP-GlcNAc by the transfer of uridine 5-monophosphate (from uridine 5-triphosphate), a reaction catalyzed by the N-terminal domain. This chain is Bifunctional protein GlmU, found in Hahella chejuensis (strain KCTC 2396).